The following is a 272-amino-acid chain: MKKFLLKPKKSLGQNFILSSEITKKIVALAGSLENFNVIEIGPGYGALTREILVHNPKSLLSIEKDRDLVKHHDQLLNEHQGKYRIIEADALHVTEEELIERPVKVIANLPYNISVVLFLKWLNNIKFFTNLTLMFQKEVADRITARPNSKDYGSLSVLSQLLCDIKKEFDIEPKEFFPRPKIHSSVITVNPLPIPKFAVNLETLTRLTRAVFSQRRKMLRNSLQNITNHTETVLENAKLSGNERPENLTIEQFCLLANNVECLFCKSPIAI.

Positions 15, 17, 42, 64, 90, and 109 each coordinate S-adenosyl-L-methionine.

Belongs to the class I-like SAM-binding methyltransferase superfamily. rRNA adenine N(6)-methyltransferase family. RsmA subfamily.

It is found in the cytoplasm. It catalyses the reaction adenosine(1518)/adenosine(1519) in 16S rRNA + 4 S-adenosyl-L-methionine = N(6)-dimethyladenosine(1518)/N(6)-dimethyladenosine(1519) in 16S rRNA + 4 S-adenosyl-L-homocysteine + 4 H(+). In terms of biological role, specifically dimethylates two adjacent adenosines (A1518 and A1519) in the loop of a conserved hairpin near the 3'-end of 16S rRNA in the 30S particle. May play a critical role in biogenesis of 30S subunits. The sequence is that of Ribosomal RNA small subunit methyltransferase A from Wolbachia sp. subsp. Drosophila simulans (strain wRi).